Consider the following 312-residue polypeptide: MGRCRVLVVGGTGYIGKRIVKASIEHGHDTYVLKRPETGLDIEKFQLLLSFKKQGAHLVEASFSDHESLVRAVKLVDVVICTVSGAHSRSLLLQLKLVEAIKEAGNVKRFIPSEFGMDPARMGDALEPGRETFDLKMVVRKAIEDANIPHTYISANCFGGYFVGNLSQLGPLTPPSDKVTIYGDGNVKVVYMDEDDVATYTIMTIEDDRTLNKTMYFRPPENVITHRQLVETWEKLSGNQLQKTELSSQDFLALMEGKDVAEQIVIGHLYHIYYEGCLTNFDIDADQDQVEASSLYPEVEYTRMKDYLMIYL.

Residues 10-16 (GGTGYIG), R35, and K44 each bind NADP(+). The active-site Proton acceptor is K136. R140 provides a ligand contact to NADP(+). A substrate-binding site is contributed by H268.

Belongs to the NmrA-type oxidoreductase family. Isoflavone reductase subfamily. Dimer. In terms of tissue distribution, expressed in seed coats, but not in embryos, leaves, stems and roots.

In terms of biological role, reductase involved in lignan biosynthesis. Catalyzes the sequential conversion of pinoresinol into lariciresinol and of lariciresinol into secoisolariciresinol. Abstracts the 4R-hydride from the NADPH cofactor during catalysis. This Linum usitatissimum (Flax) protein is Bifunctional pinoresinol-lariciresinol reductase.